A 63-amino-acid chain; its full sequence is DNA gyrase inhibitor YacG (63 aa).

Positions 9, 12, 28, and 32 each coordinate Zn(2+).

It belongs to the DNA gyrase inhibitor YacG family. In terms of assembly, interacts with GyrB. Zn(2+) serves as cofactor.

Inhibits all the catalytic activities of DNA gyrase by preventing its interaction with DNA. Acts by binding directly to the C-terminal domain of GyrB, which probably disrupts DNA binding by the gyrase. This is DNA gyrase inhibitor YacG from Salmonella choleraesuis (strain SC-B67).